Reading from the N-terminus, the 228-residue chain is Putative N-acetylmannosamine-6-phosphate 2-epimerase (228 aa).

Belongs to the NanE family.

It catalyses the reaction an N-acyl-D-glucosamine 6-phosphate = an N-acyl-D-mannosamine 6-phosphate. It participates in amino-sugar metabolism; N-acetylneuraminate degradation; D-fructose 6-phosphate from N-acetylneuraminate: step 3/5. Converts N-acetylmannosamine-6-phosphate (ManNAc-6-P) to N-acetylglucosamine-6-phosphate (GlcNAc-6-P). The chain is Putative N-acetylmannosamine-6-phosphate 2-epimerase from Pasteurella multocida (strain Pm70).